Here is a 1150-residue protein sequence, read N- to C-terminus: PAN2-PAN3 deadenylation complex catalytic subunit PAN2 (1150 aa).

WD repeat units lie at residues 26 to 67, 114 to 156, 158 to 194, and 290 to 328; these read AHHS…MEFQ, GHVN…ITKE, PAPN…VINT, and GHTH…VSFV. Residues 326-471 form a linker region; that stretch reads SFVDQGLPVE…IRTDIESLKS (146 aa). Positions 472–862 constitute a USP domain; sequence VVPNMYHLFE…TPLVVMFQLK (391 aa). Residues 911-1079 form the Exonuclease domain; sequence AIDAEFVLAK…HDSIEDANTA (169 aa). A divalent metal cation contacts are provided by D913, E915, D1022, and D1075. The segment at 1118–1150 is disordered; sequence GQSAQRTETPPMVDDAQPGALLPYQPPELLQGS.

Belongs to the peptidase C19 family. PAN2 subfamily. As to quaternary structure, forms a heterotrimer with an asymmetric homodimer of the regulatory subunit PAN3 to form the poly(A)-nuclease (PAN) deadenylation complex. A divalent metal cation serves as cofactor.

It localises to the cytoplasm. The catalysed reaction is Exonucleolytic cleavage of poly(A) to 5'-AMP.. Its activity is regulated as follows. Positively regulated by the regulatory subunit PAN3. Its function is as follows. Catalytic subunit of the poly(A)-nuclease (PAN) deadenylation complex, one of two cytoplasmic mRNA deadenylases involved in mRNA turnover. PAN specifically shortens poly(A) tails of RNA and the activity is stimulated by poly(A)-binding protein PAB1. PAN deadenylation is followed by rapid degradation of the shortened mRNA tails by the CCR4-NOT complex. Deadenylated mRNAs are then degraded by two alternative mechanisms, namely exosome-mediated 3'-5' exonucleolytic degradation, or deadenylation-dependent mRNA decaping and subsequent 5'-3' exonucleolytic degradation by XRN1. May also be involved in post-transcriptional maturation of mRNA poly(A) tails. The polypeptide is PAN2-PAN3 deadenylation complex catalytic subunit PAN2 (Pyricularia oryzae (strain 70-15 / ATCC MYA-4617 / FGSC 8958) (Rice blast fungus)).